Reading from the N-terminus, the 575-residue chain is Phosphoenolpyruvate-protein phosphotransferase (575 aa).

Catalysis depends on His-191, which acts as the Tele-phosphohistidine intermediate. 2 residues coordinate phosphoenolpyruvate: Arg-298 and Arg-334. Residues Glu-435 and Asp-459 each contribute to the Mg(2+) site. Residues 458–459 and Arg-469 each bind phosphoenolpyruvate; that span reads ND. The active-site Proton donor is Cys-506.

Belongs to the PEP-utilizing enzyme family. Homodimer. The cofactor is Mg(2+).

The protein localises to the cytoplasm. The catalysed reaction is L-histidyl-[protein] + phosphoenolpyruvate = N(pros)-phospho-L-histidyl-[protein] + pyruvate. In terms of biological role, general (non sugar-specific) component of the phosphoenolpyruvate-dependent sugar phosphotransferase system (sugar PTS). This major carbohydrate active-transport system catalyzes the phosphorylation of incoming sugar substrates concomitantly with their translocation across the cell membrane. Enzyme I transfers the phosphoryl group from phosphoenolpyruvate (PEP) to the phosphoryl carrier protein (HPr). In Lactococcus lactis subsp. cremoris (Streptococcus cremoris), this protein is Phosphoenolpyruvate-protein phosphotransferase (ptsI).